The following is a 172-amino-acid chain: Adenine phosphoribosyltransferase (172 aa).

This sequence belongs to the purine/pyrimidine phosphoribosyltransferase family. Homodimer.

The protein localises to the cytoplasm. The enzyme catalyses AMP + diphosphate = 5-phospho-alpha-D-ribose 1-diphosphate + adenine. Its pathway is purine metabolism; AMP biosynthesis via salvage pathway; AMP from adenine: step 1/1. Catalyzes a salvage reaction resulting in the formation of AMP, that is energically less costly than de novo synthesis. The polypeptide is Adenine phosphoribosyltransferase (Exiguobacterium sp. (strain ATCC BAA-1283 / AT1b)).